Consider the following 364-residue polypeptide: Anthranilate N-methyltransferase (364 aa).

A disordered region spans residues 1–20; that stretch reads MGSLSESHTQYKHGVEVEED. Residues Gly209, Asp232, Met253, and Lys266 each contribute to the S-adenosyl-L-methionine site. The Proton acceptor role is filled by His270.

Belongs to the class I-like SAM-binding methyltransferase superfamily. Cation-independent O-methyltransferase family. COMT subfamily. In terms of assembly, homodimer. As to expression, expressed in leaves, flowers, stems and roots. Detected in the vascular tissues in stems, in the rhizodermis or the endodermis of roots, in the inside of carpels, in the central vascular bundles of the syncarp ovary and in the secretory oil glands located around the outer ovary wall.

It catalyses the reaction anthranilate + S-adenosyl-L-methionine = N-methylanthranilate + S-adenosyl-L-homocysteine + H(+). With respect to regulation, inhibited by Ca(2+), Co(2+), Fe(2+), Fe(3+), Cu(2+) or Zn(2+). No effect of Mg(2+). Involved in the biosynthesis of acridine alkaloids. N-methyltransferase with a strict substrate specificity for anthranilate. No activity with anthranilic acid methyl ester, anthraniloyl CoA, 3- or 4-amino-benzoic acid, salicylic acid, catechol, eugenol, caffeic acid, quercetin, theobromin, theophyllin, putrescine and nicotinic acid among others. This is Anthranilate N-methyltransferase from Ruta graveolens (Common rue).